Consider the following 313-residue polypeptide: Probable RuBisCO transcriptional regulator (313 aa).

Residues 6 to 63 form the HTH lysR-type domain; sequence FTLDQLLILKAIAAQGSFKKAADSLYISQPAVSMQVQNIEKQLNVQLLDRGGRRANLT. Residues 23–42 constitute a DNA-binding region (H-T-H motif); that stretch reads FKKAADSLYISQPAVSMQVQ.

This sequence belongs to the LysR transcriptional regulatory family.

It localises to the plastid. Its subcellular location is the chloroplast. Trans-acting transcriptional regulator of RuBisCO genes (rbcL and rbcS) expression. The chain is Probable RuBisCO transcriptional regulator (rbcR) from Chlorokybus atmophyticus (Soil alga).